An 825-amino-acid polypeptide reads, in one-letter code: Cytosolic phospholipase A2 delta (825 aa).

The region spanning 14 to 133 is the C2 domain; that stretch reads SPERLHGHPY…LPGQLLQKTF (120 aa). Residues D47, D53, D103, D105, and D111 each contribute to the Ca(2+) site. The PLA2c domain maps to 281–825; the sequence is DCCPKELSVR…SETRPLGVKT (545 aa). A substrate-binding site is contributed by 339–340; it reads GG. S370 acts as the Nucleophile in catalysis. Catalysis depends on D654, which acts as the Proton acceptor.

Ca(2+) serves as cofactor. Weakly or not expressed in most tissues. Detected in placenta of 17.5 dpc embryos.

The protein resides in the cytoplasm. The protein localises to the cytosol. It is found in the membrane. It catalyses the reaction a 1,2-diacyl-sn-glycero-3-phosphocholine + H2O = a 1-acyl-sn-glycero-3-phosphocholine + a fatty acid + H(+). The enzyme catalyses 1-hexadecanoyl-2-(5Z,8Z,11Z,14Z-eicosatetraenoyl)-sn-glycero-3-phosphocholine + H2O = 1-hexadecanoyl-sn-glycero-3-phosphocholine + (5Z,8Z,11Z,14Z)-eicosatetraenoate + H(+). It carries out the reaction 1-hexadecanoyl-2-(9Z,12Z-octadecadienoyl)-sn-glycero-3-phosphocholine + H2O = (9Z,12Z)-octadecadienoate + 1-hexadecanoyl-sn-glycero-3-phosphocholine + H(+). The catalysed reaction is 1-hexadecanoyl-2-(9Z-octadecenoyl)-sn-glycero-3-phosphocholine + H2O = 1-hexadecanoyl-sn-glycero-3-phosphocholine + (9Z)-octadecenoate + H(+). It catalyses the reaction 1-hexadecanoyl-2-(5Z,8Z,11Z,14Z-eicosatetraenoyl)-sn-glycero-3-phosphoethanolamine + H2O = 1-hexadecanoyl-sn-glycero-3-phosphoethanolamine + (5Z,8Z,11Z,14Z)-eicosatetraenoate + H(+). The enzyme catalyses 1-hexadecanoyl-2-(9Z,12Z-octadecadienoyl)-sn-glycero-3-phosphoethanolamine + H2O = 1-hexadecanoyl-sn-glycero-3-phosphoethanolamine + (9Z,12Z)-octadecadienoate + H(+). It carries out the reaction 1-hexadecanoyl-sn-glycero-3-phosphocholine + H2O = sn-glycerol 3-phosphocholine + hexadecanoate + H(+). It functions in the pathway lipid metabolism; fatty acid metabolism. Its activity is regulated as follows. Stimulated by cytosolic Ca(2+). Calcium-dependent phospholipase A2 that selectively hydrolyzes glycerophospholipids in the sn-2 position. Compared to its human ortholog, may have no preference for the fatty acid found at the sn-2 position. In Mus musculus (Mouse), this protein is Cytosolic phospholipase A2 delta.